The following is a 41-amino-acid chain: Large ribosomal subunit protein bL36 (41 aa).

Belongs to the bacterial ribosomal protein bL36 family.

This Chelativorans sp. (strain BNC1) protein is Large ribosomal subunit protein bL36.